The following is a 357-amino-acid chain: Membrane-bound lytic murein transglycosylase C (357 aa).

A signal peptide spans 1–16 (MKKMLALLVIAPLLVS). A lipid anchor (N-palmitoyl cysteine) is attached at Cys17. The S-diacylglycerol cysteine moiety is linked to residue Cys17.

Belongs to the transglycosylase Slt family.

Its subcellular location is the cell outer membrane. The enzyme catalyses Exolytic cleavage of the (1-&gt;4)-beta-glycosidic linkage between N-acetylmuramic acid (MurNAc) and N-acetylglucosamine (GlcNAc) residues in peptidoglycan, from either the reducing or the non-reducing ends of the peptidoglycan chains, with concomitant formation of a 1,6-anhydrobond in the MurNAc residue.. In terms of biological role, murein-degrading enzyme. May play a role in recycling of muropeptides during cell elongation and/or cell division. This Pectobacterium atrosepticum (strain SCRI 1043 / ATCC BAA-672) (Erwinia carotovora subsp. atroseptica) protein is Membrane-bound lytic murein transglycosylase C.